A 473-amino-acid polypeptide reads, in one-letter code: Cephalotoxin-like protein (473 aa).

An N-terminal signal peptide occupies residues 1-21 (RWLGWQKFCWISCLFSSISSG). Coiled coils occupy residues 40–60 (AINA…EALK) and 116–147 (LINE…ADTA).

Component of the acid-insoluble and acid-soluble organic matrix of the aragonitic skeleton (at protein level).

It is found in the secreted. In Acropora millepora (Staghorn coral), this protein is Cephalotoxin-like protein.